The chain runs to 463 residues: Peptidylprolyl isomerase cyp7 (463 aa).

A PPIase cyclophilin-type domain is found at 11–166 (ATGTVILKTT…FPPKIISTEV (156 aa)). A disordered region spans residues 224–275 (VKKPLRQKTPVSRSSDTTTELSKDLISSSSSIHSTYSSAQTGLTSAKVSSDE). A compositionally biased stretch (polar residues) spans 232-243 (TPVSRSSDTTTE). Positions 250–261 (SSSSSIHSTYSS) are enriched in low complexity. Over residues 262-271 (AQTGLTSAKV) the composition is skewed to polar residues.

It belongs to the cyclophilin-type PPIase family. CWC27 subfamily. Belongs to the 40S cdc5-associated complex (or cwf complex), a spliceosome sub-complex reminiscent of a late-stage spliceosome composed of the U2, U5 and U6 snRNAs and at least brr2, cdc5, cwf2/prp3, cwf3/syf1, cwf4/syf3, cwf5/ecm2, spp42/cwf6, cwf7/spf27, cwf8, cwf9, cwf10, cwf11, cwf12, prp45/cwf13, cwf14, cwf15, cwf16, cwf17, cwf18, cwf19, cwf20, cwf21, cwf22, cwf23, cwf24, cwf25, cwf26, cyp7/cwf27, cwf28, cwf29/ist3, lea1, msl1, prp5/cwf1, prp10, prp12/sap130, prp17, prp22, sap61, sap62, sap114, sap145, slu7, smb1, smd1, smd3, smf1, smg1 and syf2.

It localises to the cytoplasm. The protein resides in the nucleus. It carries out the reaction [protein]-peptidylproline (omega=180) = [protein]-peptidylproline (omega=0). PPIases accelerate the folding of proteins. Catalyzes the cis-trans isomerization of proline imidic peptide bonds in oligopeptides. Involved in pre-mRNA splicing. This chain is Peptidylprolyl isomerase cyp7 (cyp7), found in Schizosaccharomyces pombe (strain 972 / ATCC 24843) (Fission yeast).